A 218-amino-acid chain; its full sequence is Mitochondrial fission factor (218 aa).

Residues 1–198 (MAEISRIQYE…ENKERAKREM (198 aa)) lie on the Cytoplasmic side of the membrane. The residue at position 89 (Thr-89) is a Phosphothreonine. A phosphoserine mark is found at Ser-129, Ser-131, Ser-146, and Ser-171. Residues 167 to 198 (VDAASLRRQIIKLNRRLQLLEEENKERAKREM) adopt a coiled-coil conformation. Residues 199–216 (VMYSITVAFWLLNSWLWF) traverse the membrane as a helical; Anchor for type IV membrane protein segment. Residues 217 to 218 (RR) are Mitochondrial intermembrane-facing.

This sequence belongs to the Tango11 family. As to quaternary structure, homodimer. Interacts with DNM1L. Interacts with C11orf65/MFI; the interaction inhibits MFF interaction with DNM1L.

It is found in the mitochondrion outer membrane. It localises to the peroxisome. The protein resides in the cytoplasmic vesicle. The protein localises to the secretory vesicle. Its subcellular location is the synaptic vesicle. Functionally, plays a role in mitochondrial and peroxisomal fission. Promotes the recruitment and association of the fission mediator dynamin-related protein 1 (DNM1L) to the mitochondrial surface. May be involved in regulation of synaptic vesicle membrane dynamics by recruitment of DNM1L to clathrin-containing vesicles. The chain is Mitochondrial fission factor (Mff) from Rattus norvegicus (Rat).